The primary structure comprises 335 residues: Putative zinc metalloprotease CPE1693 (335 aa).

A Zn(2+)-binding site is contributed by H17. E18 is a catalytic residue. Zn(2+) is bound at residue H21. The next 3 helical transmembrane spans lie at 88 to 110 (ILVM…IGLA), 262 to 284 (LLWF…FPAL), and 312 to 334 (TVGF…IFPI). One can recognise a PDZ domain in the interval 96–174 (FMNYVLALII…PVELEIKRGN (79 aa)).

It belongs to the peptidase M50B family. Requires Zn(2+) as cofactor.

Its subcellular location is the cell membrane. The sequence is that of Putative zinc metalloprotease CPE1693 from Clostridium perfringens (strain 13 / Type A).